Here is a 155-residue protein sequence, read N- to C-terminus: RNA pyrophosphohydrolase (155 aa).

Residues 5–147 (KYRPNVAAII…KRQVYRQVIA (143 aa)) form the Nudix hydrolase domain. Residues 42 to 63 (GGIDEGETPLEALHRELLEEIG) carry the Nudix box motif.

Belongs to the Nudix hydrolase family. RppH subfamily. A divalent metal cation is required as a cofactor.

Its function is as follows. Accelerates the degradation of transcripts by removing pyrophosphate from the 5'-end of triphosphorylated RNA, leading to a more labile monophosphorylated state that can stimulate subsequent ribonuclease cleavage. This chain is RNA pyrophosphohydrolase, found in Helicobacter pylori (strain G27).